The following is a 294-amino-acid chain: Putative ribose uptake protein RbsU (294 aa).

10 helical membrane passes run Asn2–Gly24, Ile34–Ile56, Ile63–Val82, Met92–Trp114, Leu121–Ser140, Gly150–Pro172, Gly179–Gly198, Ile218–Ala235, Leu242–Leu264, and Ile274–Ile293.

This sequence belongs to the GRP transporter (TC 2.A.7.5) family.

It localises to the cell membrane. Could be involved in the uptake of ribose. The polypeptide is Putative ribose uptake protein RbsU (rbsU) (Latilactobacillus sakei subsp. sakei (strain 23K) (Lactobacillus sakei subsp. sakei)).